We begin with the raw amino-acid sequence, 250 residues long: MSILEKIQEKQPLILNLANFVTPQRVADAISFAGGSPLMTAEISESETLVEIADAVVVNIGTISEKDYPLFLTICQLANQKHKPLILDPVAVNVPFRANFVKRLMQEVKFDIIRGNSAEIAWFADKESLNKGIDALESNLEVEHARVAAQKTGAVIIQTGKVDVISNGFEELFVETDSPLFKINVGCGDMLSAIVGTFAAVSDDLFKAAYEATEFFGESGVKATEQVENLPGNFVNRFLDKIYQATQEVI.

Residue M39 participates in substrate binding. The ATP site is built by R114 and T159. G186 contributes to the substrate binding site.

This sequence belongs to the Thz kinase family. Mg(2+) is required as a cofactor.

It catalyses the reaction 5-(2-hydroxyethyl)-4-methylthiazole + ATP = 4-methyl-5-(2-phosphooxyethyl)-thiazole + ADP + H(+). The protein operates within cofactor biosynthesis; thiamine diphosphate biosynthesis; 4-methyl-5-(2-phosphoethyl)-thiazole from 5-(2-hydroxyethyl)-4-methylthiazole: step 1/1. Functionally, catalyzes the phosphorylation of the hydroxyl group of 4-methyl-5-beta-hydroxyethylthiazole (THZ). This Lactococcus lactis subsp. lactis (strain IL1403) (Streptococcus lactis) protein is Hydroxyethylthiazole kinase.